We begin with the raw amino-acid sequence, 115 residues long: Migration and invasion enhancer 1 (115 aa).

Ser-2 is modified (N-acetylserine). Cys-30 and Cys-33 form a disulfide bridge. A lipid anchor (S-geranylgeranyl cysteine) is attached at Cys-112. Residues 113-115 (VIL) constitute a propeptide, removed in mature form.

Belongs to the SelWTH family. In terms of assembly, interacts with GPX1. Post-translationally, isoprenylation facilitates association with the plasma membrane and enhances the migratory phenotype of cells by inducing increased filopodia formation. In terms of tissue distribution, widely expressed with highest levels in kidney followed by brain and testis.

Its subcellular location is the cytoplasm. It localises to the cytosol. The protein resides in the cell membrane. Increases cell migration by inducing filopodia formation at the leading edge of migrating cells. Plays a role in regulation of apoptosis, possibly through control of CASP3. May be involved in a redox-related process. The protein is Migration and invasion enhancer 1 (Mien1) of Mus musculus (Mouse).